We begin with the raw amino-acid sequence, 428 residues long: Serine hydroxymethyltransferase (428 aa).

Residue 120–122 (GHI) participates in (6S)-5,6,7,8-tetrahydrofolate binding. Position 226 is an N6-(pyridoxal phosphate)lysine (K226).

Belongs to the SHMT family. In terms of assembly, homodimer. The cofactor is pyridoxal 5'-phosphate.

The protein resides in the cytoplasm. It catalyses the reaction 5,10-methylenetetrahydromethanopterin + glycine + H2O = 5,6,7,8-tetrahydromethanopterin + L-serine. The protein operates within amino-acid biosynthesis; glycine biosynthesis; glycine from L-serine: step 1/1. Functionally, catalyzes the reversible interconversion of serine and glycine with tetrahydromethanopterin (H4MPT) serving as the one-carbon carrier. Also exhibits a pteridine-independent aldolase activity toward beta-hydroxyamino acids, producing glycine and aldehydes, via a retro-aldol mechanism. The protein is Serine hydroxymethyltransferase of Methanopyrus kandleri (strain AV19 / DSM 6324 / JCM 9639 / NBRC 100938).